Here is a 98-residue protein sequence, read N- to C-terminus: La1-like protein 13 (98 aa).

A signal peptide spans 1-24 (MERILKPVFLAILIVLSFSSQCMG). Lysine 97 carries the lysine amide modification.

It belongs to the scorpion La1-like peptide family. Post-translationally, contains 4 disulfide bonds. In terms of tissue distribution, expressed by the venom gland.

The protein localises to the secreted. The protein is La1-like protein 13 of Urodacus yaschenkoi (Inland robust scorpion).